Consider the following 1641-residue polypeptide: Alpha-2-macroglobulin (1641 aa).

An N-terminal signal peptide occupies residues 1 to 31; sequence MRDRVAMMLRPLVRGWIPRAVLLLTVAFSFG. Residue Cys32 is the site of N-palmitoyl cysteine attachment. Cys32 carries the S-diacylglycerol cysteine lipid modification. The segment at residues 1166–1169 is a cross-link (isoglutamyl cysteine thioester (Cys-Gln)); the sequence is CAEQ.

It belongs to the protease inhibitor I39 (alpha-2-macroglobulin) family. Bacterial alpha-2-macroglobulin subfamily.

The protein localises to the cell membrane. In terms of biological role, protects the bacterial cell from host peptidases. This is Alpha-2-macroglobulin from Xylella fastidiosa (strain 9a5c).